A 122-amino-acid chain; its full sequence is Large ribosomal subunit protein uL14 (122 aa).

This sequence belongs to the universal ribosomal protein uL14 family. In terms of assembly, part of the 50S ribosomal subunit. Forms a cluster with proteins L3 and L19. In the 70S ribosome, L14 and L19 interact and together make contacts with the 16S rRNA in bridges B5 and B8.

Functionally, binds to 23S rRNA. Forms part of two intersubunit bridges in the 70S ribosome. The chain is Large ribosomal subunit protein uL14 from Kocuria rhizophila (strain ATCC 9341 / DSM 348 / NBRC 103217 / DC2201).